The primary structure comprises 410 residues: MYGHLSLSTLSLLAVVAAAPFPESWLQPRDSDVSQLFRRGAPDPKASDYLSYYPSPGSTPNVSTIPQAWLDKLATVQLPNVSVATANDGRPTYPNNENDGDSEICSFTDQCYVEDDLYSPPGEKVWALSFDDGPTDVSPALYDYLAQNNISSSATHFMIGGNIITSPQSVLIAIEAGGHLAVHTWSHPYMTTLTNEQVVAELGWTMQALSDLNGGRIPMYWRPPYGDVDNRVRAIAKGVFGLVTVLWDSDTNDWAISDQPDQYSVASVEAYFDTLVTGNRTQGLLLLEHELDNNTVEVFETEYPKAVANGWSVKNVADAFSMKWYLNSGKGNDDVVTTMSVAGTLTTAKPTHTSTSVASATATSSASVTDSAGVSIASAASSQESSSWPIANRPSLFVIACGLALAAIMV.

The first 18 residues, 1–18, serve as a signal peptide directing secretion; the sequence is MYGHLSLSTLSLLAVVAA. Positions 19–39 are excised as a propeptide; that stretch reads APFPESWLQPRDSDVSQLFRR. N-linked (GlcNAc...) asparagine glycosylation is found at Asn-61 and Asn-80. One can recognise a NodB homology domain in the interval 124–314; it reads KVWALSFDDG…KAVANGWSVK (191 aa). Catalysis depends on Asp-131, which acts as the Proton acceptor. Asp-131 is a binding site for acetate. Co(2+) is bound at residue Asp-132. Asn-149 carries an N-linked (GlcNAc...) asparagine glycan. Residues His-183 and His-187 each contribute to the Co(2+) site. Tyr-225 contributes to the acetate binding site. Asn-279 carries N-linked (GlcNAc...) asparagine glycosylation. The active-site Proton donor is the His-289. N-linked (GlcNAc...) asparagine glycosylation is present at Asn-293. Ser-385 carries the GPI-anchor amidated serine lipid modification. Residues 386 to 410 constitute a propeptide, removed in mature form; it reads SSWPIANRPSLFVIACGLALAAIMV.

The protein belongs to the polysaccharide deacetylase family. Co(2+) is required as a cofactor.

It is found in the cell membrane. The catalysed reaction is [(1-&gt;4)-N-acetyl-beta-D-glucosaminyl](n) + n H2O = chitosan + n acetate. Its function is as follows. Hydrolyzes the N-acetamido groups of N-acetyl-D-glucosamine residues in chitin to form chitosan and acetate. Chitosan is required to anchor melanin to the cell wall, for maintenance of cell wall integrity, and for proper cytokinesis. Chitosan offers an advantage during infection as it is less readily detected than chitin by host immunosurveillance mechanisms. This chain is Chitin deacetylase 3, found in Cryptococcus neoformans var. neoformans serotype D (strain JEC21 / ATCC MYA-565) (Filobasidiella neoformans).